A 452-amino-acid polypeptide reads, in one-letter code: Probable cysteine protease RD21C (452 aa).

Residues 1 to 29 (MATSIKSITLALLIFSVLLISLSLGSVTA) form the signal peptide. The propeptide at 30–128 (TETTRNEAEA…EKYLYKVGDS (99 aa)) is activation peptide. N-linked (GlcNAc...) asparagine glycosylation occurs at asparagine 82. 5 cysteine pairs are disulfide-bonded: cysteine 150-cysteine 192, cysteine 184-cysteine 226, cysteine 284-cysteine 335, cysteine 363-cysteine 375, and cysteine 369-cysteine 390. Cysteine 153 is an active-site residue. Active-site residues include histidine 290 and asparagine 310. Residues 346 to 452 (KSSGSNPPKP…KSTNMLVGSA (107 aa)) constitute a propeptide, removed in mature form.

This sequence belongs to the peptidase C1 family. In terms of assembly, interacts with WSCP.

In terms of biological role, probable thiol protease. The protein is Probable cysteine protease RD21C of Arabidopsis thaliana (Mouse-ear cress).